Consider the following 255-residue polypeptide: ATP synthase subunit a 2 (255 aa).

A run of 5 helical transmembrane segments spans residues 26-46, 86-106, 131-151, 205-225, and 230-250; these read SINI…IGVF, LIGP…SIDL, DVNV…GYTL, MIFI…SVPW, and ILIV…YLAM.

It belongs to the ATPase A chain family. As to quaternary structure, F-type ATPases have 2 components, CF(1) - the catalytic core - and CF(0) - the membrane proton channel. CF(1) has five subunits: alpha(3), beta(3), gamma(1), delta(1), epsilon(1). CF(0) has three main subunits: a(1), b(2) and c(9-12). The alpha and beta chains form an alternating ring which encloses part of the gamma chain. CF(1) is attached to CF(0) by a central stalk formed by the gamma and epsilon chains, while a peripheral stalk is formed by the delta and b chains.

It is found in the cell inner membrane. Functionally, key component of the proton channel; it plays a direct role in the translocation of protons across the membrane. The protein is ATP synthase subunit a 2 of Photobacterium profundum (strain SS9).